The following is a 256-amino-acid chain: Putative ankyrin repeat protein FPV231 (256 aa).

ANK repeat units follow at residues 1 to 20 (MFGN…RIDS), 24 to 53 (EECL…DTNI), 57 to 86 (YNRS…DYNL), 90 to 119 (HGYT…DPNI), and 123 to 151 (EKHT…DINI).

The polypeptide is Putative ankyrin repeat protein FPV231 (Vertebrata (FPV)).